The chain runs to 179 residues: ATP synthase subunit delta (179 aa).

The protein belongs to the ATPase delta chain family. F-type ATPases have 2 components, F(1) - the catalytic core - and F(0) - the membrane proton channel. F(1) has five subunits: alpha(3), beta(3), gamma(1), delta(1), epsilon(1). F(0) has three main subunits: a(1), b(2) and c(10-14). The alpha and beta chains form an alternating ring which encloses part of the gamma chain. F(1) is attached to F(0) by a central stalk formed by the gamma and epsilon chains, while a peripheral stalk is formed by the delta and b chains.

The protein resides in the cell membrane. In terms of biological role, f(1)F(0) ATP synthase produces ATP from ADP in the presence of a proton or sodium gradient. F-type ATPases consist of two structural domains, F(1) containing the extramembraneous catalytic core and F(0) containing the membrane proton channel, linked together by a central stalk and a peripheral stalk. During catalysis, ATP synthesis in the catalytic domain of F(1) is coupled via a rotary mechanism of the central stalk subunits to proton translocation. Functionally, this protein is part of the stalk that links CF(0) to CF(1). It either transmits conformational changes from CF(0) to CF(1) or is implicated in proton conduction. In Listeria monocytogenes serovar 1/2a (strain ATCC BAA-679 / EGD-e), this protein is ATP synthase subunit delta.